We begin with the raw amino-acid sequence, 429 residues long: Arginine biosynthesis bifunctional protein ArgJ (429 aa).

Substrate contacts are provided by Thr181, Lys207, Thr218, Glu302, Asn424, and Ser429. Catalysis depends on Thr218, which acts as the Nucleophile.

Belongs to the ArgJ family. Heterotetramer of two alpha and two beta chains.

Its subcellular location is the cytoplasm. It catalyses the reaction N(2)-acetyl-L-ornithine + L-glutamate = N-acetyl-L-glutamate + L-ornithine. The catalysed reaction is L-glutamate + acetyl-CoA = N-acetyl-L-glutamate + CoA + H(+). Its pathway is amino-acid biosynthesis; L-arginine biosynthesis; L-ornithine and N-acetyl-L-glutamate from L-glutamate and N(2)-acetyl-L-ornithine (cyclic): step 1/1. It functions in the pathway amino-acid biosynthesis; L-arginine biosynthesis; N(2)-acetyl-L-ornithine from L-glutamate: step 1/4. Functionally, catalyzes two activities which are involved in the cyclic version of arginine biosynthesis: the synthesis of N-acetylglutamate from glutamate and acetyl-CoA as the acetyl donor, and of ornithine by transacetylation between N(2)-acetylornithine and glutamate. This chain is Arginine biosynthesis bifunctional protein ArgJ, found in Chlorobium chlorochromatii (strain CaD3).